The following is a 156-amino-acid chain: MGKLTVVGILTLFIFYIVAASGKCTAPVNCPAGWKKYKTNCYFFSPDGKNWHDAAKQCQTMGGYLVKITDSEENSWVVDMITKSVKHKYGYWMGMADLKNEGDWRWVNDSSAVSYSNWHRGQPNNANNEDCGHFWSAVNYEWNDIVCNTDQMGYIC.

The N-terminal stretch at methionine 1–glycine 22 is a signal peptide. 3 disulfide bridges follow: cysteine 30-cysteine 41, cysteine 58-cysteine 156, and cysteine 131-cysteine 147. The region spanning tyrosine 37–cysteine 156 is the C-type lectin domain.

Component of the organic matrix of calcified shell layers like nacre and prisms.

It localises to the secreted. This is Perlucin-like protein from Mytilus galloprovincialis (Mediterranean mussel).